Consider the following 494-residue polypeptide: Anthranilate synthase component 1 (494 aa).

L-tryptophan-binding positions include serine 52 and 274 to 276 (PYM). 309–310 (GT) contributes to the chorismate binding site. Residue glutamate 336 coordinates Mg(2+). Residues tyrosine 424, arginine 444, 458 to 460 (GAG), and glycine 460 each bind chorismate. Glutamate 473 is a binding site for Mg(2+).

Belongs to the anthranilate synthase component I family. Heterotetramer consisting of two non-identical subunits: a beta subunit (TrpG) and a large alpha subunit (TrpE). Mg(2+) is required as a cofactor.

The enzyme catalyses chorismate + L-glutamine = anthranilate + pyruvate + L-glutamate + H(+). Its pathway is amino-acid biosynthesis; L-tryptophan biosynthesis; L-tryptophan from chorismate: step 1/5. Feedback inhibited by tryptophan. In terms of biological role, part of a heterotetrameric complex that catalyzes the two-step biosynthesis of anthranilate, an intermediate in the biosynthesis of L-tryptophan. In the first step, the glutamine-binding beta subunit (TrpG) of anthranilate synthase (AS) provides the glutamine amidotransferase activity which generates ammonia as a substrate that, along with chorismate, is used in the second step, catalyzed by the large alpha subunit of AS (TrpE) to produce anthranilate. In the absence of TrpG, TrpE can synthesize anthranilate directly from chorismate and high concentrations of ammonia. The protein is Anthranilate synthase component 1 (trpE) of Aquifex aeolicus (strain VF5).